The following is a 249-amino-acid chain: MLQKVTGIVVRTVNYGESNKVVTLFTEELGKVAIMARGAKKPGSRFHASSQPFVEGVYIFPSSRGLAQLKSSDVMTSYPEIRKDVERMAYAMYWLELVDRSVEDRVQNRPLFRILQDALQALNAGMDADVITHYVELRILHLLGVAPVLTGCVRCGDVTDPMYFSVASGGFLCARHPEEGVILLSERLAKLLYLMSKHELSEFRNVPLSDESRVLLRQLFDAYMESYSGLRLKTKRVLDQMIRLHLNED.

The protein belongs to the RecO family.

Its function is as follows. Involved in DNA repair and RecF pathway recombination. The polypeptide is DNA repair protein RecO (Exiguobacterium sp. (strain ATCC BAA-1283 / AT1b)).